A 295-amino-acid polypeptide reads, in one-letter code: Pyridoxal 5'-phosphate synthase subunit PdxS (295 aa).

D25 is a binding site for D-ribose 5-phosphate. The active-site Schiff-base intermediate with D-ribose 5-phosphate is K82. G154 contributes to the D-ribose 5-phosphate binding site. R166 provides a ligand contact to D-glyceraldehyde 3-phosphate. Residues G215 and 236–237 (GS) each bind D-ribose 5-phosphate.

The protein belongs to the PdxS/SNZ family. In the presence of PdxT, forms a dodecamer of heterodimers.

The enzyme catalyses aldehydo-D-ribose 5-phosphate + D-glyceraldehyde 3-phosphate + L-glutamine = pyridoxal 5'-phosphate + L-glutamate + phosphate + 3 H2O + H(+). It functions in the pathway cofactor biosynthesis; pyridoxal 5'-phosphate biosynthesis. In terms of biological role, catalyzes the formation of pyridoxal 5'-phosphate from ribose 5-phosphate (RBP), glyceraldehyde 3-phosphate (G3P) and ammonia. The ammonia is provided by the PdxT subunit. Can also use ribulose 5-phosphate and dihydroxyacetone phosphate as substrates, resulting from enzyme-catalyzed isomerization of RBP and G3P, respectively. The chain is Pyridoxal 5'-phosphate synthase subunit PdxS from Haemophilus ducreyi (strain 35000HP / ATCC 700724).